The chain runs to 215 residues: Protein HP-25 homolog 2 (215 aa).

Positions 1–30 (MPGRGGQSLSMVCVDVWILALSVLSVMADA) are cleaved as a signal peptide. Residues 35-79 (VTESCDSQGPPGLPGPPGLPGPPGPPGPPGPPGLRGPTGIPGDIE) form a disordered region. The region spanning 43–76 (GPPGLPGPPGLPGPPGPPGPPGPPGLRGPTGIPG) is the Collagen-like domain. The segment covering 45 to 68 (PGLPGPPGLPGPPGPPGPPGPPGL) has biased composition (pro residues). A C1q domain is found at 82–215 (LSPPKSAFAV…GYLLYGNYPG (134 aa)).

The protein localises to the secreted. The sequence is that of Protein HP-25 homolog 2 from Bos taurus (Bovine).